Reading from the N-terminus, the 142-residue chain is Large ribosomal subunit protein uL13 (142 aa).

It belongs to the universal ribosomal protein uL13 family. In terms of assembly, part of the 50S ribosomal subunit.

Functionally, this protein is one of the early assembly proteins of the 50S ribosomal subunit, although it is not seen to bind rRNA by itself. It is important during the early stages of 50S assembly. The sequence is that of Large ribosomal subunit protein uL13 from Buchnera aphidicola subsp. Acyrthosiphon pisum (strain 5A).